A 217-amino-acid polypeptide reads, in one-letter code: Small ribosomal subunit protein eS6 (217 aa).

Belongs to the eukaryotic ribosomal protein eS6 family. Phosphorylated.

This is Small ribosomal subunit protein eS6 (RPS6) from Encephalitozoon cuniculi (strain GB-M1) (Microsporidian parasite).